The sequence spans 176 residues: 3-hydroxyacyl-[acyl-carrier-protein] dehydratase FabZ (176 aa).

His54 is a catalytic residue.

This sequence belongs to the thioester dehydratase family. FabZ subfamily.

The protein resides in the cytoplasm. The enzyme catalyses a (3R)-hydroxyacyl-[ACP] = a (2E)-enoyl-[ACP] + H2O. Its function is as follows. Involved in unsaturated fatty acids biosynthesis. Catalyzes the dehydration of short chain beta-hydroxyacyl-ACPs and long chain saturated and unsaturated beta-hydroxyacyl-ACPs. The sequence is that of 3-hydroxyacyl-[acyl-carrier-protein] dehydratase FabZ from Yersinia pseudotuberculosis serotype O:1b (strain IP 31758).